A 107-amino-acid chain; its full sequence is Nucleoid-associated protein RT0857 (107 aa).

It belongs to the YbaB/EbfC family. In terms of assembly, homodimer.

It is found in the cytoplasm. The protein localises to the nucleoid. Functionally, binds to DNA and alters its conformation. May be involved in regulation of gene expression, nucleoid organization and DNA protection. The sequence is that of Nucleoid-associated protein RT0857 from Rickettsia typhi (strain ATCC VR-144 / Wilmington).